A 537-amino-acid chain; its full sequence is Syncytin-2 (537 aa).

The signal sequence occupies residues 1-15 (MGLLLLVLILTPLLA). At 16 to 478 (AYRHPDFPLL…GWLNWEGTWK (463 aa)) the chain is on the extracellular side. The CXXC signature appears at 43–46 (CWLC). Disulfide bonds link Cys-43-Cys-46, Cys-43-Cys-439, and Cys-431-Cys-438. N-linked (GlcNAc...) asparagine glycans are attached at residues Asn-133, Asn-146, Asn-177, Asn-220, Asn-241, Asn-247, Asn-312, and Asn-332. Residues 354–374 (FIPLLAGLGILAGTGTGIAGI) form a fusion peptide region. The short motif at 414 to 430 (LQNRRGLDMLTAAQGGI) is the CKS-17 element. The CX6CC motif lies at 431–439 (CLALDEKCC). The N-linked (GlcNAc...) asparagine glycan is linked to Asn-443. A helical transmembrane segment spans residues 479-499 (WFSWVLPFIGPLVSLLLLLLF). Residues 500–537 (GPCLLNLITQFVSSRLQAIKLQTNGAGCRPRNIQESPF) lie on the Cytoplasmic side of the membrane.

This sequence belongs to the gamma type-C retroviral envelope protein family. HERV class-I FRD env subfamily. In terms of assembly, the surface and transmembrane proteins form a heterodimer. They are attached by non-covalent interactions or by a labile interchain disulfide bond. Specific enzymatic cleavages in vivo yield the mature SU and TM proteins. Post-translationally, the CXXC motif is highly conserved across a broad range of retroviral envelope proteins. It is thought to participate in the formation of a labile disulfide bond possibly with the CX6CC motif present in the transmembrane protein.

It localises to the virion. It is found in the cell membrane. This endogenous retroviral envelope protein has retained its original fusogenic properties and participates in trophoblast fusion and the formation of a syncytium during placenta morphogenesis. The interaction with MFSD2A is apparently important for this process. In terms of biological role, endogenous envelope proteins may have kept, lost or modified their original function during evolution but this one can still make pseudotypes with MLV, HIV-1 or SIV-1 virions and confer infectivity. Retroviral envelope proteins mediate receptor recognition and membrane fusion during early infection. The surface protein mediates receptor recognition, while the transmembrane protein anchors the envelope heterodimer to the viral membrane through one transmembrane domain. The other hydrophobic domain, called fusion peptide, mediates fusion of the viral membrane with the target cell membrane. This Macaca fascicularis (Crab-eating macaque) protein is Syncytin-2 (ERVFRD-1).